Consider the following 515-residue polypeptide: GMP synthase [glutamine-hydrolyzing] (515 aa).

Residues 10–200 (TIIVLDFGSQ…VFGVCGCSEG (191 aa)) enclose the Glutamine amidotransferase type-1 domain. The active-site Nucleophile is Cys87. Residues His174 and Glu176 contribute to the active site. A GMPS ATP-PPase domain is found at 201 to 390 (WNMENFIEVE…LGIPDEIVWR (190 aa)). 228-234 (SGGVDSS) lines the ATP pocket.

Homodimer.

The enzyme catalyses XMP + L-glutamine + ATP + H2O = GMP + L-glutamate + AMP + diphosphate + 2 H(+). It participates in purine metabolism; GMP biosynthesis; GMP from XMP (L-Gln route): step 1/1. Catalyzes the synthesis of GMP from XMP. The sequence is that of GMP synthase [glutamine-hydrolyzing] from Bacillus thuringiensis subsp. konkukian (strain 97-27).